The chain runs to 267 residues: Translation initiation factor 2 subunit alpha (267 aa).

The 72-residue stretch at 17-88 (GEIVIGTVKR…KRGHIDLSIK (72 aa)) folds into the S1 motif domain.

It belongs to the eIF-2-alpha family. In terms of assembly, heterotrimer composed of an alpha, a beta and a gamma chain.

EIF-2 functions in the early steps of protein synthesis by forming a ternary complex with GTP and initiator tRNA. This Archaeoglobus fulgidus (strain ATCC 49558 / DSM 4304 / JCM 9628 / NBRC 100126 / VC-16) protein is Translation initiation factor 2 subunit alpha (eif2a).